The primary structure comprises 305 residues: tRNA pseudouridine synthase B (305 aa).

Residue aspartate 39 is the Nucleophile of the active site.

Belongs to the pseudouridine synthase TruB family. Type 1 subfamily.

It carries out the reaction uridine(55) in tRNA = pseudouridine(55) in tRNA. Functionally, responsible for synthesis of pseudouridine from uracil-55 in the psi GC loop of transfer RNAs. This Staphylococcus aureus (strain MW2) protein is tRNA pseudouridine synthase B.